Reading from the N-terminus, the 133-residue chain is Small ribosomal subunit protein uS9 (133 aa).

This sequence belongs to the universal ribosomal protein uS9 family.

This chain is Small ribosomal subunit protein uS9, found in Picrophilus torridus (strain ATCC 700027 / DSM 9790 / JCM 10055 / NBRC 100828 / KAW 2/3).